A 264-amino-acid chain; its full sequence is tRNA pseudouridine synthase A (264 aa).

D51 acts as the Nucleophile in catalysis. Y109 serves as a coordination point for substrate.

It belongs to the tRNA pseudouridine synthase TruA family. As to quaternary structure, homodimer.

It catalyses the reaction uridine(38/39/40) in tRNA = pseudouridine(38/39/40) in tRNA. Its function is as follows. Formation of pseudouridine at positions 38, 39 and 40 in the anticodon stem and loop of transfer RNAs. The sequence is that of tRNA pseudouridine synthase A from Aromatoleum aromaticum (strain DSM 19018 / LMG 30748 / EbN1) (Azoarcus sp. (strain EbN1)).